Reading from the N-terminus, the 199-residue chain is Holliday junction branch migration complex subunit RuvA (199 aa).

The tract at residues Met1–Thr63 is domain I. The tract at residues Thr64–Ala142 is domain II. The interval Gly143–Leu153 is flexible linker. The interval Leu153 to Pro199 is domain III.

It belongs to the RuvA family. Homotetramer. Forms an RuvA(8)-RuvB(12)-Holliday junction (HJ) complex. HJ DNA is sandwiched between 2 RuvA tetramers; dsDNA enters through RuvA and exits via RuvB. An RuvB hexamer assembles on each DNA strand where it exits the tetramer. Each RuvB hexamer is contacted by two RuvA subunits (via domain III) on 2 adjacent RuvB subunits; this complex drives branch migration. In the full resolvosome a probable DNA-RuvA(4)-RuvB(12)-RuvC(2) complex forms which resolves the HJ.

It localises to the cytoplasm. In terms of biological role, the RuvA-RuvB-RuvC complex processes Holliday junction (HJ) DNA during genetic recombination and DNA repair, while the RuvA-RuvB complex plays an important role in the rescue of blocked DNA replication forks via replication fork reversal (RFR). RuvA specifically binds to HJ cruciform DNA, conferring on it an open structure. The RuvB hexamer acts as an ATP-dependent pump, pulling dsDNA into and through the RuvAB complex. HJ branch migration allows RuvC to scan DNA until it finds its consensus sequence, where it cleaves and resolves the cruciform DNA. The polypeptide is Holliday junction branch migration complex subunit RuvA (Shouchella clausii (strain KSM-K16) (Alkalihalobacillus clausii)).